Here is a 37-residue protein sequence, read N- to C-terminus: Photosystem II reaction center protein T (37 aa).

The chain crosses the membrane as a helical span at residues 3–23 (ALVYTFLLVGTLGIIFFAIFF).

The protein belongs to the PsbT family. In terms of assembly, PSII is composed of 1 copy each of membrane proteins PsbA, PsbB, PsbC, PsbD, PsbE, PsbF, PsbH, PsbI, PsbJ, PsbK, PsbL, PsbM, PsbT, PsbY, PsbZ, Psb30/Ycf12, at least 3 peripheral proteins of the oxygen-evolving complex and a large number of cofactors. It forms dimeric complexes.

It is found in the plastid. The protein localises to the chloroplast thylakoid membrane. In terms of biological role, found at the monomer-monomer interface of the photosystem II (PS II) dimer, plays a role in assembly and dimerization of PSII. PSII is a light-driven water plastoquinone oxidoreductase, using light energy to abstract electrons from H(2)O, generating a proton gradient subsequently used for ATP formation. The protein is Photosystem II reaction center protein T of Spirogyra maxima (Green alga).